Here is a 32-residue protein sequence, read N- to C-terminus: Hyaluronidase-Pk1a (32 aa).

N-linked (GlcNAc...) asparagine glycosylation is present at asparagine 23.

This sequence belongs to the glycosyl hydrolase 56 family. As to expression, expressed by the venom gland.

Its subcellular location is the secreted. It carries out the reaction Random hydrolysis of (1-&gt;4)-linkages between N-acetyl-beta-D-glucosamine and D-glucuronate residues in hyaluronate.. In terms of biological role, hydrolyzes high molecular weight hyaluronic acid to produce small oligosaccharides. In Phoneutria keyserlingi (Brazilian wandering spider), this protein is Hyaluronidase-Pk1a.